Reading from the N-terminus, the 120-residue chain is C-C motif chemokine 27 (120 aa).

Positions Met-1 to Ala-25 are cleaved as a signal peptide. Intrachain disulfides connect Cys-34–Cys-63 and Cys-35–Cys-78.

The protein belongs to the intercrine beta (chemokine CC) family. Monomer, dimer, and tetramer. Heparin avidly promotes oligomerization. Interacts with TNFAIP6 (via Link domain). In terms of tissue distribution, isoform 1 is predominantly expressed in placenta and weakly in skin. Isoform 2 is predominantly expressed in testes and brain, weakly in kidney and liver and even lower in heart and muscle. Low expression of both isoforms in other tissues.

It is found in the secreted. Its subcellular location is the nucleus. Functionally, chemotactic factor that attracts skin-associated memory T-lymphocytes. May play a role in mediating homing of lymphocytes to cutaneous sites. May play a role in cell migration during embryogenesis. Nuclear forms may facilitate cellular migration by inducing cytoskeletal relaxation. Binds to CCR10. In Mus musculus (Mouse), this protein is C-C motif chemokine 27 (Ccl27).